Here is a 513-residue protein sequence, read N- to C-terminus: Fructose import ATP-binding protein FruK (513 aa).

ABC transporter domains are found at residues 8–244 (VVMK…IGKS) and 262–505 (PGEK…IANT). Residue 40-47 (GENGAGKS) participates in ATP binding.

This sequence belongs to the ABC transporter superfamily. In terms of assembly, the complex is composed of an ATP-binding protein (FruK), two transmembrane proteins (FruF and FruG) and a solute-binding protein (FruE).

The protein resides in the cell membrane. It catalyses the reaction D-fructose(out) + ATP + H2O = D-fructose(in) + ADP + phosphate + H(+). In terms of biological role, part of the high-affinity ABC transporter complex FruEKFG involved in fructose uptake. Can also transport ribose and xylose, with lower affinity. Probably responsible for energy coupling to the transport system. In Bifidobacterium longum (strain NCC 2705), this protein is Fructose import ATP-binding protein FruK.